The sequence spans 801 residues: Transducin beta-like protein 3 (801 aa).

An N-acetylalanine modification is found at A2. WD repeat units follow at residues 64–105, 107–146, 149–190, 193–232, 245–284, 290–329, 332–372, 374–413, 419–459, 477–516, 519–560, 562–602, and 604–642; these read EDQE…RLWK, IHTAPVASMAFDATSTLLATGGCDGAVRVWDIVQHYGTHH, GSPG…CLAV, AHYSAVTSLSFSEGGHTMLSSGRDKICIVWDLQSYQTTRT, LPEQPAPALGVKSSGLHFLTAGDQGILRVWEAASGQCVYT, GLRQELTHCTLARAADLLLTVTADHNLLLYEAHSLQLQKQ, GYSE…CQIL, GHTDIVLALDVFRKGWLFASCAKDQSIRIWKMNKAGQVAC, GHTH…LAKS, CHDKDINSLAVSPNDKLLATGSQDRTAKLWALPQCQLLGV, GHRR…KTFE, HDAS…RTLD, and HEDKVWGLHCSQLDDHAITGGSDSRIILWKDVTEAEQAE. S257 carries the phosphoserine modification. K407 participates in a covalent cross-link: Glycyl lysine isopeptide (Lys-Gly) (interchain with G-Cter in SUMO2).

In terms of assembly, part of the small subunit (SSU) processome, composed of more than 70 proteins and the RNA chaperone small nucleolar RNA (snoRNA) U3.

The protein resides in the nucleus. It is found in the nucleolus. Part of the small subunit (SSU) processome, first precursor of the small eukaryotic ribosomal subunit. During the assembly of the SSU processome in the nucleolus, many ribosome biogenesis factors, an RNA chaperone and ribosomal proteins associate with the nascent pre-rRNA and work in concert to generate RNA folding, modifications, rearrangements and cleavage as well as targeted degradation of pre-ribosomal RNA by the RNA exosome. This is Transducin beta-like protein 3 (Tbl3) from Mus musculus (Mouse).